The sequence spans 225 residues: NAD(P)H-quinone oxidoreductase subunit K, chloroplastic (225 aa).

The [4Fe-4S] cluster site is built by C43, C44, C108, and C139.

Belongs to the complex I 20 kDa subunit family. In terms of assembly, NDH is composed of at least 16 different subunits, 5 of which are encoded in the nucleus. Requires [4Fe-4S] cluster as cofactor.

Its subcellular location is the plastid. It is found in the chloroplast thylakoid membrane. The enzyme catalyses a plastoquinone + NADH + (n+1) H(+)(in) = a plastoquinol + NAD(+) + n H(+)(out). It catalyses the reaction a plastoquinone + NADPH + (n+1) H(+)(in) = a plastoquinol + NADP(+) + n H(+)(out). In terms of biological role, NDH shuttles electrons from NAD(P)H:plastoquinone, via FMN and iron-sulfur (Fe-S) centers, to quinones in the photosynthetic chain and possibly in a chloroplast respiratory chain. The immediate electron acceptor for the enzyme in this species is believed to be plastoquinone. Couples the redox reaction to proton translocation, and thus conserves the redox energy in a proton gradient. The polypeptide is NAD(P)H-quinone oxidoreductase subunit K, chloroplastic (Illicium oligandrum (Star anise)).